A 161-amino-acid chain; its full sequence is Pathogenesis-related protein 1 (161 aa).

The first 26 residues, 1 to 26 (MKVTSYSRILIILAALVGALVVPLKA), serve as a signal peptide directing secretion. The 116-residue stretch at 34-149 (VNAHNQARSQ…NGGTIISCNY (116 aa)) folds into the SCP domain. Disulfide bonds link Cys-70-Cys-138, Cys-113-Cys-117, and Cys-133-Cys-147.

Belongs to the CRISP family. Expressed in flowers, stems and roots but not in leaves.

Functionally, probably involved in the defense reaction of plants against pathogens. This chain is Pathogenesis-related protein 1, found in Arabidopsis thaliana (Mouse-ear cress).